The primary structure comprises 373 residues: Peroxisomal biogenesis factor 3 (373 aa).

Residues 1-15 (MFRSTWNFLKRHKKK) are Cytoplasmic-facing. The segment at 1 to 45 (MFRSTWNFLKRHKKKCIFLGTVLGGVYILGKYGQKKIREIQEREA) is targeting to peroxisomes. The helical transmembrane segment at 16-36 (CIFLGTVLGGVYILGKYGQKK) threads the bilayer. Topologically, residues 37–116 (IREIQEREAA…LKIISFTRSI (80 aa)) are peroxisomal. The helical transmembrane segment at 117–140 (VAVYSTCMLVVLLRVQLNIIGGYI) threads the bilayer. Residues 120-136 (YSTCMLVVLLRVQLNII) form an interaction with PEX19 region. The Cytoplasmic portion of the chain corresponds to 141–373 (YLDNAAVGKN…AFSTPQQLEK (233 aa)).

Belongs to the peroxin-3 family. Interacts with PEX19.

It localises to the peroxisome membrane. Functionally, involved in peroxisome biosynthesis and integrity. Assembles membrane vesicles before the matrix proteins are translocated. As a docking factor for PEX19, is necessary for the import of peroxisomal membrane proteins in the peroxisomes. The polypeptide is Peroxisomal biogenesis factor 3 (PEX3) (Bos taurus (Bovine)).